The sequence spans 271 residues: Putative phosphoenolpyruvate synthase regulatory protein (271 aa).

Residue 152-159 (GVSRSGKT) participates in ADP binding.

Belongs to the pyruvate, phosphate/water dikinase regulatory protein family. PSRP subfamily.

It carries out the reaction [pyruvate, water dikinase] + ADP = [pyruvate, water dikinase]-phosphate + AMP + H(+). The enzyme catalyses [pyruvate, water dikinase]-phosphate + phosphate + H(+) = [pyruvate, water dikinase] + diphosphate. Bifunctional serine/threonine kinase and phosphorylase involved in the regulation of the phosphoenolpyruvate synthase (PEPS) by catalyzing its phosphorylation/dephosphorylation. The chain is Putative phosphoenolpyruvate synthase regulatory protein from Thiocapsa roseopersicina.